The sequence spans 436 residues: Protein FAM83A (436 aa).

The segment at 1–298 is DUF1669; sequence MSRSRHVGKI…LYASSKPLMG (298 aa). The interval 73-95 is disordered; sequence AQAKEPPDAPDSAGGAESGPRGL. Phosphoserine occurs at positions 301, 329, 350, and 359. Residues 302–371 form a disordered region; the sequence is PRLVAPFQPN…APIPPTVPRL (70 aa). The segment covering 321–349 has biased composition (polar residues); sequence LSGTSDSASDRTSSNPFSSLSTGSNAHNQ. Over residues 350–359 the composition is skewed to low complexity; that stretch reads SLSTSSGPSS.

Belongs to the FAM83 family. In terms of assembly, directly interacts (via DUF1669) with casein kinase isoforms CSNK1A1, CSNK1A1L, CSNK1D and CSNK1E. May be phosphorylated upon EGFR activation. In terms of tissue distribution, widely expressed, with relatively higher expression levels in adipose tissues, especially in epididymal and inguinal white adipose tissue (at protein level).

It localises to the cytoplasm. Its subcellular location is the mitochondrion. Functionally, involved in mitochondrial maintenance during adipogenesis. May be acting by playing a role in the maintenance of normal mitochondrial function. In Mus musculus (Mouse), this protein is Protein FAM83A.